A 120-amino-acid chain; its full sequence is Autophagy-related protein 8C (120 aa).

Positions 1–20 (MARSSFKLEHPLERRQAEAN) are disordered. Gly-117 is lipidated: Phosphatidylethanolamine amidated glycine. Positions 118–120 (LFV) are cleaved as a propeptide — removed in mature form.

It belongs to the ATG8 family. As to quaternary structure, interacts with ATG4. Post-translationally, the C-terminal 3 residues are removed by ATG4 to expose Gly-117 at the C-terminus. The C-terminal Gly is then amidated with phosphatidylethanolamine by an activating system similar to that for ubiquitin.

It is found in the cytoplasmic vesicle. The protein resides in the autophagosome membrane. It localises to the vacuole membrane. Its subcellular location is the cytoplasm. The protein localises to the cytoskeleton. Ubiquitin-like modifier involved in autophagosomes formation. May mediate the delivery of the autophagosomes to the vacuole via the microtubule cytoskeleton. This is Autophagy-related protein 8C (ATG8C) from Oryza sativa subsp. indica (Rice).